Here is a 249-residue protein sequence, read N- to C-terminus: NAD(P)H-quinone oxidoreductase subunit K (249 aa).

[4Fe-4S] cluster contacts are provided by Cys-65, Cys-66, Cys-130, and Cys-161.

The protein belongs to the complex I 20 kDa subunit family. NDH-1 can be composed of about 15 different subunits; different subcomplexes with different compositions have been identified which probably have different functions. Requires [4Fe-4S] cluster as cofactor.

The protein resides in the cellular thylakoid membrane. The catalysed reaction is a plastoquinone + NADH + (n+1) H(+)(in) = a plastoquinol + NAD(+) + n H(+)(out). It carries out the reaction a plastoquinone + NADPH + (n+1) H(+)(in) = a plastoquinol + NADP(+) + n H(+)(out). In terms of biological role, NDH-1 shuttles electrons from an unknown electron donor, via FMN and iron-sulfur (Fe-S) centers, to quinones in the respiratory and/or the photosynthetic chain. The immediate electron acceptor for the enzyme in this species is believed to be plastoquinone. Couples the redox reaction to proton translocation, and thus conserves the redox energy in a proton gradient. Cyanobacterial NDH-1 also plays a role in inorganic carbon-concentration. The chain is NAD(P)H-quinone oxidoreductase subunit K from Prochlorococcus marinus (strain NATL2A).